A 609-amino-acid polypeptide reads, in one-letter code: Alpha-fetoprotein (609 aa).

Positions 1–18 (MKWVVSILLIFLLNSTES) are cleaved as a signal peptide. Albumin domains lie at 19–210 (RTMH…ATIT), 211–402 (KELR…EELQ), and 403–601 (KYIQ…QLIS). Histidine 22 provides a ligand contact to Cu(2+). Disulfide bonds link cysteine 99/cysteine 114, cysteine 113/cysteine 124, cysteine 148/cysteine 193, cysteine 192/cysteine 201, cysteine 224/cysteine 270, cysteine 269/cysteine 277, cysteine 289/cysteine 303, and cysteine 302/cysteine 313. Residues serine 111 and serine 115 each carry the phosphoserine modification. The N-linked (GlcNAc...) asparagine glycan is linked to asparagine 251. Serine 344 is modified (phosphoserine). 7 disulfide bridges follow: cysteine 384-cysteine 393, cysteine 416-cysteine 462, cysteine 461-cysteine 472, cysteine 485-cysteine 501, cysteine 500-cysteine 511, cysteine 538-cysteine 583, and cysteine 582-cysteine 591.

The protein belongs to the ALB/AFP/VDB family. In terms of assembly, dimeric and trimeric forms have been found in addition to the monomeric form. In terms of processing, sulfated. In terms of tissue distribution, plasma.

The protein localises to the secreted. Binds copper, nickel, and fatty acids as well as, and bilirubin less well than, serum albumin. In Equus caballus (Horse), this protein is Alpha-fetoprotein (AFP).